The chain runs to 281 residues: Succinate dehydrogenase [ubiquinone] iron-sulfur subunit 1, mitochondrial (281 aa).

The N-terminal 25 residues, 1–25, are a transit peptide targeting the mitochondrion; it reads MAAAALLRRSPAARALLSPALSSRL. Positions 26–48 are disordered; that stretch reads VASKPHSSSPAPPPPPSKAGANT. One can recognise a 2Fe-2S ferredoxin-type domain in the interval 49 to 141; sequence KTFSIYRWDP…ASTISPLPHM (93 aa). Positions 102, 107, and 122 each coordinate [2Fe-2S] cluster. Positions 184–214 constitute a 4Fe-4S ferredoxin-type domain; the sequence is DRAKLDGMYECILCACCSTSCPSYWWNPEEY. Cysteine 194, cysteine 197, and cysteine 200 together coordinate [4Fe-4S] cluster. Residue cysteine 204 participates in [3Fe-4S] cluster binding. Position 209 (tryptophan 209) interacts with a ubiquinone. [3Fe-4S] cluster contacts are provided by cysteine 251 and cysteine 257. Cysteine 261 provides a ligand contact to [4Fe-4S] cluster.

Belongs to the succinate dehydrogenase/fumarate reductase iron-sulfur protein family. Component of complex II composed of eight subunits in plants: four classical SDH subunits SDH1, SDH2, SDH3 and SDH4 (a flavoprotein (FP), an iron-sulfur protein (IP), and a cytochrome b composed of a large and a small subunit.), as well as four subunits unknown in mitochondria from bacteria and heterotrophic eukaryotes. [2Fe-2S] cluster serves as cofactor. The cofactor is [3Fe-4S] cluster. [4Fe-4S] cluster is required as a cofactor.

The protein localises to the mitochondrion inner membrane. It carries out the reaction a quinone + succinate = fumarate + a quinol. It functions in the pathway carbohydrate metabolism; tricarboxylic acid cycle; fumarate from succinate (eukaryal route): step 1/1. Its function is as follows. Iron-sulfur protein (IP) subunit of succinate dehydrogenase (SDH) that is involved in complex II of the mitochondrial electron transport chain and is responsible for transferring electrons from succinate to ubiquinone (coenzyme Q). This is Succinate dehydrogenase [ubiquinone] iron-sulfur subunit 1, mitochondrial from Oryza sativa subsp. japonica (Rice).